The sequence spans 138 residues: Basic phospholipase A2 BP-III (138 aa).

A signal peptide spans 1–16 (MRTLWIMAVLLVGVDG). 7 disulfides stabilise this stretch: Cys42–Cys132, Cys44–Cys60, Cys59–Cys112, Cys65–Cys138, Cys66–Cys105, Cys73–Cys98, and Cys91–Cys103. Residues Gly45 and Gly47 each contribute to the Ca(2+) site. His63 is an active-site residue. Residue Asp106 is part of the active site.

Belongs to the phospholipase A2 family. Group II subfamily. K49 sub-subfamily. Requires Ca(2+) as cofactor. Expressed by the venom gland.

It is found in the secreted. It catalyses the reaction a 1,2-diacyl-sn-glycero-3-phosphocholine + H2O = a 1-acyl-sn-glycero-3-phosphocholine + a fatty acid + H(+). Snake venom phospholipase A2 (PLA2) that has low phospholipase A2 activity. Shows anticoagulant activities, strong myolytic activity, infiltration of polymorphonuclear cells, and edema in stromal tissues. Induces cell death of Jurkat cells in a concentration dependent manner. PLA2 catalyzes the calcium-dependent hydrolysis of the 2-acyl groups in 3-sn-phosphoglycerides. This chain is Basic phospholipase A2 BP-III, found in Protobothrops flavoviridis (Habu).